Reading from the N-terminus, the 59-residue chain is uncharacterized protein (59 aa).

This is an uncharacterized protein from Dictyostelium discoideum (Social amoeba).